Reading from the N-terminus, the 1342-residue chain is DNA-directed RNA polymerase subunit beta (1342 aa).

Belongs to the RNA polymerase beta chain family. The RNAP catalytic core consists of 2 alpha, 1 beta, 1 beta' and 1 omega subunit. When a sigma factor is associated with the core the holoenzyme is formed, which can initiate transcription.

The enzyme catalyses RNA(n) + a ribonucleoside 5'-triphosphate = RNA(n+1) + diphosphate. Its function is as follows. DNA-dependent RNA polymerase catalyzes the transcription of DNA into RNA using the four ribonucleoside triphosphates as substrates. The polypeptide is DNA-directed RNA polymerase subunit beta (Aliivibrio fischeri (strain ATCC 700601 / ES114) (Vibrio fischeri)).